The chain runs to 329 residues: Epoxide hydrolase (329 aa).

One can recognise an AB hydrolase-1 domain in the interval 35–308 (PAVLFCHGFP…DNVGHWVQHE (274 aa)). Catalysis depends on Asp-111, which acts as the Nucleophile. Residue Tyr-242 is the Proton donor of the active site. His-303 serves as the catalytic Proton acceptor.

Belongs to the AB hydrolase superfamily. Epoxide hydrolase family. In terms of assembly, homodimer.

The enzyme catalyses an epoxide + H2O = an ethanediol. The catalysed reaction is (R)-styrene oxide + H2O = (R)-styrene glycol. It carries out the reaction (S)-styrene oxide + H2O = (S)-styrene glycol. It catalyses the reaction 3,4-epoxy-1-cyclohexene + H2O = cyclohex-3-ene-1,2-diol. Its function is as follows. Catalyzes the hydrolysis of various epoxides into diols. In vitro, shows the strongest activity toward aromatic and cyclic aliphatic epoxide compounds, since it shows strong activity toward (R)-styrene oxide, (S)-styrene oxide, and 3,4-epoxy-1-cyclohexene, but very weak activity toward (R)-epichlorohydrin, (S)-epichlorohydrin, and 1,2-epoxy-9-decene. The chain is Epoxide hydrolase from Caballeronia sordidicola (Burkholderia sordidicola).